A 139-amino-acid chain; its full sequence is Large ribosomal subunit protein uL16 (139 aa).

The span at 1 to 13 (MLQPARRKYRKEQ) shows a compositional bias: basic residues. The tract at residues 1–23 (MLQPARRKYRKEQKGRNTGISHS) is disordered.

This sequence belongs to the universal ribosomal protein uL16 family. Part of the 50S ribosomal subunit.

Its function is as follows. Binds 23S rRNA and is also seen to make contacts with the A and possibly P site tRNAs. The sequence is that of Large ribosomal subunit protein uL16 from Herminiimonas arsenicoxydans.